A 641-amino-acid chain; its full sequence is Chaperone protein DnaK (641 aa).

A Phosphothreonine; by autocatalysis modification is found at threonine 200. Residues 605 to 623 are compositionally biased toward low complexity; it reads AAEQGGSADAASGNAQASK. Positions 605 to 628 are disordered; the sequence is AAEQGGSADAASGNAQASKAADDV.

The protein belongs to the heat shock protein 70 family.

Acts as a chaperone. In Xanthomonas oryzae pv. oryzae (strain KACC10331 / KXO85), this protein is Chaperone protein DnaK.